Consider the following 612-residue polypeptide: tRNA 5-methylaminomethyl-2-thiouridine biosynthesis bifunctional protein MnmC (612 aa).

Residues 1–218 (MITFRGDGLY…KREILEASLE (218 aa)) are tRNA (mnm(5)s(2)U34)-methyltransferase. Positions 244-612 (IGAGVAGLAA…VRKLKRGLVR (369 aa)) are FAD-dependent cmnm(5)s(2)U34 oxidoreductase.

In the N-terminal section; belongs to the methyltransferase superfamily. tRNA (mnm(5)s(2)U34)-methyltransferase family. The protein in the C-terminal section; belongs to the DAO family. The cofactor is FAD.

The protein localises to the cytoplasm. It catalyses the reaction 5-aminomethyl-2-thiouridine(34) in tRNA + S-adenosyl-L-methionine = 5-methylaminomethyl-2-thiouridine(34) in tRNA + S-adenosyl-L-homocysteine + H(+). In terms of biological role, catalyzes the last two steps in the biosynthesis of 5-methylaminomethyl-2-thiouridine (mnm(5)s(2)U) at the wobble position (U34) in tRNA. Catalyzes the FAD-dependent demodification of cmnm(5)s(2)U34 to nm(5)s(2)U34, followed by the transfer of a methyl group from S-adenosyl-L-methionine to nm(5)s(2)U34, to form mnm(5)s(2)U34. The chain is tRNA 5-methylaminomethyl-2-thiouridine biosynthesis bifunctional protein MnmC from Campylobacter fetus subsp. fetus (strain 82-40).